A 1453-amino-acid polypeptide reads, in one-letter code: ABC transporter G family member 34 (1453 aa).

Positions 1-24 (MLGRDEDLVRTMSGRGSLGSTSHR) are disordered. One can recognise an ABC transporter 1 domain in the interval 173–446 (LGLFHLLPSK…FEYMGFKCPE (274 aa)). 206-213 (GPPSSGKT) contributes to the ATP binding site. Residues 524-737 (DLFKACFDRE…GQTALVINEF (214 aa)) form the ABC transmembrane type-2 1 domain. The next 6 membrane-spanning stretches (helical) occupy residues 542–562 (FVYV…MTVY), 582–602 (LFFS…FTVM), 621–641 (FALP…VIWI), 661–681 (LLAY…LGAL), 687–707 (IANS…GFII), and 773–793 (FWIC…CYII). The ABC transporter 2 domain maps to 852–1105 (LAFNNVNYYV…LVEYFEAIEG (254 aa)). 897–904 (GVSGAGKT) contributes to the ATP binding site. In terms of domain architecture, ABC transmembrane type-2 2 spans 1177–1391 (TQTKACFWKM…TLYGIITSQV (215 aa)). The next 7 membrane-spanning stretches (helical) occupy residues 1196-1216 (YNAI…LLFW), 1230-1250 (NFFG…AATV), 1289-1309 (IQTG…WTVV), 1311-1331 (FFWF…YGMM), 1341-1361 (IAGI…GFLI), 1366-1386 (IPIW…LYGI), and 1422-1442 (FLPV…FAFA).

This sequence belongs to the ABC transporter superfamily. ABCG family. PDR (TC 3.A.1.205) subfamily. In terms of tissue distribution, expressed in roots at low levels.

The protein localises to the membrane. May be a general defense protein. The sequence is that of ABC transporter G family member 34 (ABCG34) from Arabidopsis thaliana (Mouse-ear cress).